The sequence spans 271 residues: Calretinin (271 aa).

EF-hand domains lie at 16–51, 63–98, 107–142, 151–186, 195–230, and 235–270; these read LTAS…LEKA, NFGE…EENF, GSSA…LLKK, KLQE…QENF, LTSE…LYEK, and MNIQ…SEPP. Ca(2+)-binding residues include Asp29, Asp31, Asn33, Tyr35, Glu40, Asp76, Asn78, Asp80, Lys82, Glu87, Asp120, Asp122, Ser124, Tyr126, Glu131, Asp164, Asn166, Asp168, Lys170, Glu175, Asp208, Asp210, Ser212, Tyr214, and Glu219. Position 214 is a phosphotyrosine (Tyr214).

This sequence belongs to the calbindin family. As to expression, brain.

The protein resides in the synapse. The protein localises to the cell projection. Its subcellular location is the dendrite. In terms of biological role, calcium-binding protein involved in calcium homeostasis and signal transduction. It plays a critical role in buffering intracellular calcium levels and modulating calcium-dependent signaling pathways. Predominantly expressed in specific neuronal populations, influences synaptic plasticity and neuronal excitability, contributing to learning and memory. During embryonic development, it facilitates neuronal differentiation and maturation. The sequence is that of Calretinin from Homo sapiens (Human).